The sequence spans 478 residues: UDP-N-acetylmuramate--L-alanine ligase (478 aa).

130–136 (GTHGKTT) provides a ligand contact to ATP.

This sequence belongs to the MurCDEF family.

The protein localises to the cytoplasm. The enzyme catalyses UDP-N-acetyl-alpha-D-muramate + L-alanine + ATP = UDP-N-acetyl-alpha-D-muramoyl-L-alanine + ADP + phosphate + H(+). The protein operates within cell wall biogenesis; peptidoglycan biosynthesis. Cell wall formation. The protein is UDP-N-acetylmuramate--L-alanine ligase of Microcystis aeruginosa (strain NIES-843 / IAM M-2473).